A 447-amino-acid polypeptide reads, in one-letter code: Phosphoglucosamine mutase (447 aa).

S108 functions as the Phosphoserine intermediate in the catalytic mechanism. Mg(2+) is bound by residues S108, D247, D249, and D251. Phosphoserine is present on S108.

This sequence belongs to the phosphohexose mutase family. It depends on Mg(2+) as a cofactor. In terms of processing, activated by phosphorylation.

It carries out the reaction alpha-D-glucosamine 1-phosphate = D-glucosamine 6-phosphate. Functionally, catalyzes the conversion of glucosamine-6-phosphate to glucosamine-1-phosphate. The protein is Phosphoglucosamine mutase of Bordetella avium (strain 197N).